A 942-amino-acid chain; its full sequence is Replicase polyprotein P2AB (942 aa).

2 helical membrane passes run 10-30 (KSVMLMSRMSWSKLALLISVA) and 41-61 (TLICMGILVSVVLNWIVCAVC). The region spanning 129–326 (VENSRLQPLE…TVENSELYPD (198 aa)) is the Peptidase S39 domain. Catalysis depends on for protease activity residues histidine 176, aspartate 209, and serine 276. Phosphothreonine; by host is present on threonine 339. At serine 390 the chain carries Phosphoserine; by host. One can recognise a RdRp catalytic domain in the interval 691-805 (HPGAMADISG…GWVDDAPRKY (115 aa)). The disordered stretch occupies residues 888–917 (GNDGEERSSNESPATTKTQGSAAAWGPPQE). A compositionally biased stretch (polar residues) spans 897 to 908 (NESPATTKTQGS).

The polyprotein is proteolytically cleaved into several chains by the viral protease.

It is found in the host membrane. The enzyme catalyses RNA(n) + a ribonucleoside 5'-triphosphate = RNA(n+1) + diphosphate. Its function is as follows. Responsible for cleavage of polyprotein P2A and replicase polyprotein P2AB. In terms of biological role, covalently attached to the 5' extremity of the genomic and subgenomic RNAs. It may serve as a primer for the replicase. Functionally, replicates the viral genome. This is Replicase polyprotein P2AB from Dactylis glomerata (Orchard grass).